The sequence spans 1111 residues: Protein NETWORKED 1C (1111 aa).

The 81-residue stretch at 13 to 93 (YSWWWDSHNT…ERYNHATGVI (81 aa)) folds into the NAB domain. Coiled-coil stretches lie at residues 202–287 (SESE…KESS), 314–605 (ERAS…LISE), and 642–752 (KTIG…LESK). Positions 850-870 (TGGGRSMRKQDGGSGRMRKQS) are disordered. Positions 943-1009 (NREVNKRRVL…EGEEAIEKLF (67 aa)) form a coiled coil.

Belongs to the NET family.

Plant-specific actin binding protein. May be part of a membrane-cytoskeletal adapter complex. The protein is Protein NETWORKED 1C of Arabidopsis thaliana (Mouse-ear cress).